A 391-amino-acid chain; its full sequence is Steroid 3-ketoacyl-CoA thiolase (391 aa).

Cysteine 93 acts as the Acyl-thioester intermediate in catalysis. Residues glutamine 151, 221–223 (RET), and serine 246 contribute to the CoA site. Active-site proton acceptor residues include histidine 347 and cysteine 377. Glycine 379 is a substrate binding site.

This sequence belongs to the thiolase-like superfamily. Thiolase family. In terms of assembly, dimer of dimers.

The enzyme catalyses an acyl-CoA + acetyl-CoA = a 3-oxoacyl-CoA + CoA. It carries out the reaction 3-oxochol-4-en-22-oyl-CoA + acetyl-CoA = 3,22-dioxochol-4-en-24-oyl-CoA + CoA. Its pathway is steroid metabolism; cholesterol degradation. Involved in the beta-oxidation of the cholesterol side chain. It is important for utilization of cholesterol as a sole carbon source in vitro and for full virulence in the chronic stage of mouse lung infection. Catalyzes the thiolysis of 3,22-dioxochol-4-en-24-oyl-CoA to yield 3-oxo-4-pregnene-20-carboxyl-CoA (3-OPC-CoA) and acetyl-CoA. Also able to use acetoacetyl-CoA (AcAcCoA) as substrate. The polypeptide is Steroid 3-ketoacyl-CoA thiolase (fadA5) (Mycobacterium tuberculosis (strain ATCC 25618 / H37Rv)).